Reading from the N-terminus, the 344-residue chain is L-rhamnose-proton symporter (344 aa).

A run of 10 helical transmembrane segments spans residues 4–24 (AITM…CFYA), 38–58 (WSVG…ALLL), 68–88 (FSLS…IGNI), 101–121 (MGIG…TPII), 137–157 (TLLG…AGQL), 175–195 (LVLA…MNAA), 214–234 (LPSY…FCFI), 259–279 (VLLS…YAWG), 290–310 (ISWM…GLVL), and 323–343 (VLSL…IGMA).

This sequence belongs to the L-rhamnose transporter (TC 2.A.7.6) family.

The protein localises to the cell inner membrane. The enzyme catalyses L-rhamnopyranose(in) + H(+)(in) = L-rhamnopyranose(out) + H(+)(out). Its function is as follows. Uptake of L-rhamnose across the cytoplasmic membrane with the concomitant transport of protons into the cell (symport system). The chain is L-rhamnose-proton symporter from Shigella boydii serotype 18 (strain CDC 3083-94 / BS512).